The chain runs to 300 residues: 7-methylguanosine phosphate-specific 5'-nucleotidase (300 aa).

Aspartate 41 (nucleophile) is an active-site residue. Residues aspartate 41 and aspartate 43 each contribute to the Mg(2+) site. Aspartate 43 serves as the catalytic Proton donor. Glutamate 88 lines the CMP pocket. Glutamate 88 serves as a coordination point for N(7)-methyl-GMP. Substrate contacts are provided by residues 156–157 and lysine 205; that span reads SA. Aspartate 230 lines the Mg(2+) pocket. N6-acetyllysine is present on lysine 256.

The protein belongs to the pyrimidine 5'-nucleotidase family. As to quaternary structure, monomer.

The protein resides in the cytoplasm. It carries out the reaction N(7)-methyl-GMP + H2O = N(7)-methylguanosine + phosphate. It catalyses the reaction CMP + H2O = cytidine + phosphate. The enzyme catalyses a ribonucleoside 5'-phosphate + H2O = a ribonucleoside + phosphate. Its function is as follows. Specifically hydrolyzes 7-methylguanosine monophosphate (m(7)GMP) to 7-methylguanosine and inorganic phosphate. The specific activity for m(7)GMP may protect cells against undesired salvage of m(7)GMP and its incorporation into nucleic acids. Also has weak activity for CMP. UMP and purine nucleotides are poor substrates. The chain is 7-methylguanosine phosphate-specific 5'-nucleotidase (Nt5c3b) from Rattus norvegicus (Rat).